The primary structure comprises 291 residues: N-acetylmannosamine kinase (291 aa).

ATP contacts are provided by residues 5–12 and 132–139; these read AIDIGGTK and GVGGGVVC. 4 residues coordinate Zn(2+): histidine 156, cysteine 166, cysteine 168, and cysteine 173.

This sequence belongs to the ROK (NagC/XylR) family. NanK subfamily. Homodimer.

It catalyses the reaction an N-acyl-D-mannosamine + ATP = an N-acyl-D-mannosamine 6-phosphate + ADP + H(+). The protein operates within amino-sugar metabolism; N-acetylneuraminate degradation; D-fructose 6-phosphate from N-acetylneuraminate: step 2/5. Its function is as follows. Catalyzes the phosphorylation of N-acetylmannosamine (ManNAc) to ManNAc-6-P. The sequence is that of N-acetylmannosamine kinase from Salmonella heidelberg (strain SL476).